The primary structure comprises 191 residues: Leucyl/phenylalanyl-tRNA--protein transferase (191 aa).

This sequence belongs to the L/F-transferase family.

Its subcellular location is the cytoplasm. It catalyses the reaction N-terminal L-lysyl-[protein] + L-leucyl-tRNA(Leu) = N-terminal L-leucyl-L-lysyl-[protein] + tRNA(Leu) + H(+). It carries out the reaction N-terminal L-arginyl-[protein] + L-leucyl-tRNA(Leu) = N-terminal L-leucyl-L-arginyl-[protein] + tRNA(Leu) + H(+). The catalysed reaction is L-phenylalanyl-tRNA(Phe) + an N-terminal L-alpha-aminoacyl-[protein] = an N-terminal L-phenylalanyl-L-alpha-aminoacyl-[protein] + tRNA(Phe). In terms of biological role, functions in the N-end rule pathway of protein degradation where it conjugates Leu, Phe and, less efficiently, Met from aminoacyl-tRNAs to the N-termini of proteins containing an N-terminal arginine or lysine. This chain is Leucyl/phenylalanyl-tRNA--protein transferase, found in Gloeothece citriformis (strain PCC 7424) (Cyanothece sp. (strain PCC 7424)).